The sequence spans 99 residues: Sarcosine oxidase subunit delta (99 aa).

Zn(2+) contacts are provided by C6, C9, H59, and C63.

It belongs to the SoxD family. In terms of assembly, heterotetramer composed of subunits alpha (SoxA), beta (SoxB), gamma (SoxG) and delta (SoxD).

It is found in the cytoplasm. It carries out the reaction sarcosine + (6S)-5,6,7,8-tetrahydrofolate + O2 = (6R)-5,10-methylene-5,6,7,8-tetrahydrofolate + glycine + H2O2. The catalysed reaction is sarcosine + O2 + H2O = formaldehyde + glycine + H2O2. Its activity is regulated as follows. Inhibited by Zn(2+), Cu(2+), Cd(2+), Hg(2+), Ag(+), p-chloromercuribenzoate (p-CMB), iodoacetamide, N-ethylmaleimide, CN(-), o-phenanthroline and sodium lauryl sulfate. In the presence of tetrahydrofolate, catalyzes the oxidative demethylation of sarcosine to yield glycine, 5,10-methylenetetrahydrofolate and hydrogen peroxide. In the absence of tetrahydrofolate, catalyzes the oxidative demethylation of sarcosine to yield glycine, formaldehyde and hydrogen peroxide. Can also use N-methyl-L-alanine and N-ethyl-L-glycine. Is very specific for oxygen as an acceptor. The chain is Sarcosine oxidase subunit delta from Corynebacterium sp. (strain U-96).